The sequence spans 142 residues: Small ribosomal subunit protein bS6 (142 aa).

Over residues 110–133 (NKKPSHAKEKHEKTEHTHSHHTEE) the composition is skewed to basic and acidic residues. The disordered stretch occupies residues 110 to 142 (NKKPSHAKEKHEKTEHTHSHHTEEAESVGSHSE).

It belongs to the bacterial ribosomal protein bS6 family.

Its function is as follows. Binds together with bS18 to 16S ribosomal RNA. The chain is Small ribosomal subunit protein bS6 (rpsF) from Helicobacter pylori (strain ATCC 700392 / 26695) (Campylobacter pylori).